The following is a 287-amino-acid chain: Inorganic pyrophosphatase (287 aa).

Arg80 provides a ligand contact to diphosphate. Residues Asp117, Asp122, and Asp154 each contribute to the Mg(2+) site.

This sequence belongs to the PPase family. Mg(2+) is required as a cofactor.

Its subcellular location is the cytoplasm. It carries out the reaction diphosphate + H2O = 2 phosphate + H(+). The chain is Inorganic pyrophosphatase (IPP1) from Yarrowia lipolytica (strain CLIB 122 / E 150) (Yeast).